The following is a 134-amino-acid chain: UPF0412 protein YaaI (134 aa).

The signal sequence occupies residues 1–23 (MKSVFTISASLAISLMLCCTAQA).

It belongs to the UPF0412 family.

The protein is UPF0412 protein YaaI of Escherichia coli O157:H7.